A 151-amino-acid chain; its full sequence is Small ribosomal subunit protein bS6 (151 aa).

A disordered region spans residues 97-151; it reads EAEPSAMMQKRDRDDRKDRDRGDRPRRRDDDFGGGDRGDRGDRGDRPERNFGGEN. Over residues 105–151 the composition is skewed to basic and acidic residues; sequence QKRDRDDRKDRDRGDRPRRRDDDFGGGDRGDRGDRGDRPERNFGGEN.

It belongs to the bacterial ribosomal protein bS6 family.

Functionally, binds together with bS18 to 16S ribosomal RNA. The polypeptide is Small ribosomal subunit protein bS6 (Methylorubrum populi (strain ATCC BAA-705 / NCIMB 13946 / BJ001) (Methylobacterium populi)).